We begin with the raw amino-acid sequence, 1357 residues long: DNA-directed RNA polymerase subunit beta (1357 aa).

Belongs to the RNA polymerase beta chain family. The RNAP catalytic core consists of 2 alpha, 1 beta, 1 beta' and 1 omega subunit. When a sigma factor is associated with the core the holoenzyme is formed, which can initiate transcription.

It carries out the reaction RNA(n) + a ribonucleoside 5'-triphosphate = RNA(n+1) + diphosphate. Functionally, DNA-dependent RNA polymerase catalyzes the transcription of DNA into RNA using the four ribonucleoside triphosphates as substrates. The protein is DNA-directed RNA polymerase subunit beta of Pseudomonas putida (strain ATCC 700007 / DSM 6899 / JCM 31910 / BCRC 17059 / LMG 24140 / F1).